Reading from the N-terminus, the 1019-residue chain is Photoactivated adenylate cyclase subunit alpha-like protein ST- (1019 aa).

The 94-residue stretch at 55-148 (LRRLMYLSAS…GRMYGEWHMK (94 aa)) folds into the BLUF 1 domain. One can recognise a Guanylate cyclase 1 domain in the interval 204–332 (VLTFIYLVEF…DCINTASRIT (129 aa)). One can recognise a BLUF 2 domain in the interval 467 to 559 (LITLTYISQA…RVYGTPLDMT (93 aa)). A Guanylate cyclase 2 domain is found at 615–744 (VMLATDICSF…EVSARVMAVE (130 aa)). Disordered stretches follow at residues 801 to 846 (EDHL…TRPH), 887 to 923 (QIAA…DQPA), and 963 to 993 (EGHR…NRAT). Basic residues predominate over residues 821–834 (RHQRPGPGRPRRGH).

It belongs to the adenylyl cyclase class-4/guanylyl cyclase family. As to quaternary structure, heterotetramer of two alpha and two beta subunits.

It is found in the cell projection. The protein localises to the cilium. Its subcellular location is the flagellum. The protein is Photoactivated adenylate cyclase subunit alpha-like protein ST- of Euglena gracilis.